Reading from the N-terminus, the 666-residue chain is Collagen alpha-1(XXV) chain (666 aa).

Residues 1–24 (MLVKKLAGKGGGRESGSEDPRPLG) are disordered. Over 1–33 (MLVKKLAGKGGGRESGSEDPRPLGQRCAGTMPS) the chain is Cytoplasmic. Over residues 11-21 (GGRESGSEDPR) the composition is skewed to basic and acidic residues. The helical; Signal-anchor for type II membrane protein transmembrane segment at 34 to 54 (CTALATLLSVVAVAFCFYLGV) threads the bilayer. The Extracellular portion of the chain corresponds to 55–666 (KTNDLQARIA…GLPMPGCWQK (612 aa)). The tract at residues 116 to 168 (LECNCPAGPPGKRGKRGRRGESGPPGQPGPQGPPGPKGDKGEQGDQGPRMVFP) is disordered. The region spanning 121 to 164 (PAGPPGKRGKRGRRGESGPPGQPGPQGPPGPKGDKGEQGDQGPR) is the Collagen-like 1 domain. Over residues 140 to 151 (PGQPGPQGPPGP) the composition is skewed to pro residues. The interaction with amyloid-beta peptide stretch occupies residues 181–188 (LIKRRLIK). Disordered stretches follow at residues 189–428 (GDQG…ATEI) and 445–666 (LTVT…CWQK). 7 Collagen-like domains span residues 192–247 (GQAG…QKGS), 249–308 (GAPG…PGSS), 311–370 (GIKG…AGPP), 373–425 (GERG…DPGA), 455–514 (GPQG…KGEK), 529–588 (GPPG…KGAM), and 589–648 (GEPG…DGLD). Residues 196–208 (PPGPPGPPGPRGP) are compositionally biased toward pro residues. Over residues 230-245 (PGEQGLMGPLGPPGQK) the composition is skewed to low complexity. Positions 280 to 290 (EPGKEGEKGDA) are enriched in basic and acidic residues. Residues 336–358 (LPGIKGEPGFIGPQGEPGLPGLP) show a composition bias toward low complexity. Basic and acidic residues-rich tracts occupy residues 361–377 (KGDRGEAGPPGRGERGD) and 398–407 (SKGDRGDKGD). Residues 457–466 (QGLQGPKGEQ) are compositionally biased toward low complexity. The span at 494-503 (GEKGGLGLPG) shows a compositional bias: gly residues. Residues 528 to 543 (IGPPGPPGPHGPPGPM) are compositionally biased toward pro residues. Positions 615 to 638 (RGEKGDLGEKGEKGFRGVKGEKGE) are enriched in basic and acidic residues.

In terms of assembly, forms homodimers and homotrimers. Binds to the fibrillized forms of amyloid-beta protein 40 (beta-APP40) and amyloid-betad protein 42 (beta-APP42). Found associated with beta-APP42 more frequently than with beta-APP40. Post-translationally, undergoes proteolytic cleavage by furin protease to yield the soluble collagen-like Alzheimer amyloid plaque component. Glycosylated. In terms of processing, hydroxylated on proline and lysine residues. Expressed predominantly in neurons with low levels also detected in heart, testis and eye.

It is found in the membrane. Its function is as follows. Inhibits fibrillization of amyloid-beta peptide during the elongation phase. Has also been shown to assemble amyloid fibrils into protease-resistant aggregates. Binds heparin. The chain is Collagen alpha-1(XXV) chain from Mus musculus (Mouse).